A 347-amino-acid polypeptide reads, in one-letter code: Palmitoyltransferase ZDHHC19 (347 aa).

A run of 2 helical transmembrane segments spans residues 29 to 49 (VFAA…FGFP) and 59 to 79 (WAFP…LVSL). A DHHC domain is found at 112 to 162 (EWCPKCLFHRPPRTYHCPWCNICVEDFDHHCKWVNNCIGHRNFRLFMLLVL). The S-palmitoyl cysteine intermediate role is filled by Cys142. The next 2 membrane-spanning stretches (helical) occupy residues 156-176 (LFML…VTCL) and 194-214 (AILV…LLLI). The interval 275-347 (IQEKTKPSPP…PTAEPAAGDP (73 aa)) is disordered.

The protein belongs to the DHHC palmitoyltransferase family.

The protein resides in the golgi apparatus membrane. Its subcellular location is the cytoplasm. It is found in the perinuclear region. The enzyme catalyses L-cysteinyl-[protein] + hexadecanoyl-CoA = S-hexadecanoyl-L-cysteinyl-[protein] + CoA. Its function is as follows. Palmitoyltransferase that mediates palmitoylation oproteins, such as RRAS and SQSTM1. Catalyzes palmitoylation of RRAS, leading to increased cell viability. Acts as a positive regulator of autophagy by mediating palmitoylation of SQSTM1, promoting affinity between SQSTM1 and ATG8 proteins and recruitment of ubiquitinated cargo proteins to autophagosomes. In Mus musculus (Mouse), this protein is Palmitoyltransferase ZDHHC19 (Zdhhc19).